The sequence spans 230 residues: MKYNSVIRKAIFLRRPNRFQAYVVLDDEELLVHVPNTGRCREILKEGCTVLLRKGTTPNRKTPYDLIAAYKGEVLINIDSQIPNKVVEEALINKKIEKLVNFNNISREKTFGNSRFDFKLQDDNENTYFLEVKGVTLEENGETRFPDAPTERGKKHILELIEIKKLGMGAGIIFLIQIDNVNKFSPNDETDPKFGEALRLAKKERVDIFAYNCKVTEEEIELLNPVEIVL.

The protein belongs to the SfsA family.

This Clostridium perfringens (strain ATCC 13124 / DSM 756 / JCM 1290 / NCIMB 6125 / NCTC 8237 / Type A) protein is Sugar fermentation stimulation protein homolog.